The sequence spans 72 residues: DNA-directed RNA polymerase subunit omega (72 aa).

It belongs to the RNA polymerase subunit omega family. The RNAP catalytic core consists of 2 alpha, 1 beta, 1 beta' and 1 omega subunit. When a sigma factor is associated with the core the holoenzyme is formed, which can initiate transcription.

The catalysed reaction is RNA(n) + a ribonucleoside 5'-triphosphate = RNA(n+1) + diphosphate. Functionally, promotes RNA polymerase assembly. Latches the N- and C-terminal regions of the beta' subunit thereby facilitating its interaction with the beta and alpha subunits. This is DNA-directed RNA polymerase subunit omega from Petrotoga mobilis (strain DSM 10674 / SJ95).